Consider the following 267-residue polypeptide: PF03932 family protein CutC (267 aa).

The protein belongs to the CutC family.

It is found in the cytoplasm. The chain is PF03932 family protein CutC from Xylella fastidiosa (strain Temecula1 / ATCC 700964).